The chain runs to 311 residues: Probable cell division protein WhiA (311 aa).

The segment at residues 274 to 307 (SLKELGSLLTPPLTKSGVNHRFRKLELIAEKIRN) is a DNA-binding region (H-T-H motif).

This sequence belongs to the WhiA family.

Involved in cell division and chromosome segregation. The protein is Probable cell division protein WhiA of Carboxydothermus hydrogenoformans (strain ATCC BAA-161 / DSM 6008 / Z-2901).